A 106-amino-acid chain; its full sequence is MGEETINSTQNKTRTKTTRPKAVYLWTVSDVLKWYRRHCGEYTQYEQLFAQHDITGRALLRITDSSLQRMGVTDNRDREAIWREIVKQRLKTDIMEIRDMERLNIY.

Positions 26 to 91 constitute an SAM domain; that stretch reads WTVSDVLKWY…WREIVKQRLK (66 aa).

Interacts with the SAM domain of cnk.

The protein localises to the cytoplasm. The protein resides in the membrane. Required for normal photoreceptor differentiation between Ras and Raf for EGFR signaling in the eye and for mitogen-activated protein kinase phosphorylation. Probably acts together with Cnk to promote Raf activation, perhaps by recruiting an activating kinase. The protein is Protein aveugle (ave) of Drosophila melanogaster (Fruit fly).